The primary structure comprises 212 residues: B3 domain-containing protein Os04g0386900 (212 aa).

The interval 1–78 is disordered; the sequence is MRAATALPSI…PRPPEPEPEK (78 aa). Low complexity-rich tracts occupy residues 8 to 23 and 36 to 46; these read PSIP…ASDP and DAGAEDPAAVD. Residues 93 to 191 constitute a DNA-binding region (TF-B3); the sequence is FTCIMCKSHV…EFRVQVLRAE (99 aa).

The protein localises to the nucleus. In Oryza sativa subsp. japonica (Rice), this protein is B3 domain-containing protein Os04g0386900.